The primary structure comprises 474 residues: tRNA-2-methylthio-N(6)-dimethylallyladenosine synthase (474 aa).

Residues 3–120 (KKLHIKTWGC…LPEMINSVRG (118 aa)) form the MTTase N-terminal domain. Residues cysteine 12, cysteine 49, cysteine 83, cysteine 157, cysteine 161, and cysteine 164 each coordinate [4Fe-4S] cluster. The Radical SAM core domain occupies 143–375 (RAEGPTAFVS…QERINQQAMA (233 aa)). Residues 378 to 441 (RRMLGTTQRI…PNSLRGKVVR (64 aa)) enclose the TRAM domain.

Belongs to the methylthiotransferase family. MiaB subfamily. As to quaternary structure, monomer. [4Fe-4S] cluster serves as cofactor.

It localises to the cytoplasm. It catalyses the reaction N(6)-dimethylallyladenosine(37) in tRNA + (sulfur carrier)-SH + AH2 + 2 S-adenosyl-L-methionine = 2-methylsulfanyl-N(6)-dimethylallyladenosine(37) in tRNA + (sulfur carrier)-H + 5'-deoxyadenosine + L-methionine + A + S-adenosyl-L-homocysteine + 2 H(+). In terms of biological role, catalyzes the methylthiolation of N6-(dimethylallyl)adenosine (i(6)A), leading to the formation of 2-methylthio-N6-(dimethylallyl)adenosine (ms(2)i(6)A) at position 37 in tRNAs that read codons beginning with uridine. This Escherichia coli O81 (strain ED1a) protein is tRNA-2-methylthio-N(6)-dimethylallyladenosine synthase.